Here is a 484-residue protein sequence, read N- to C-terminus: Cysteine desulfurase, mitochondrial (484 aa).

A compositionally biased stretch (low complexity) spans 29-42; that stretch reads LATSASTSSSTTTS. A disordered region spans residues 29–69; the sequence is LATSASTSSSTTTSNAETGELHVSTPLDSPSVHPPDGSSIS. Residues 153–154, Asn233, Gln261, and 281–283 each bind pyridoxal 5'-phosphate; these read AT and SSH. Position 284 is an N6-(pyridoxal phosphate)lysine (Lys284). Thr321 contributes to the pyridoxal 5'-phosphate binding site. The active-site Cysteine persulfide intermediate is the Cys408. Residue Cys408 participates in [2Fe-2S] cluster binding.

It belongs to the class-V pyridoxal-phosphate-dependent aminotransferase family. NifS/IscS subfamily. It depends on pyridoxal 5'-phosphate as a cofactor.

Its subcellular location is the mitochondrion. It catalyses the reaction (sulfur carrier)-H + L-cysteine = (sulfur carrier)-SH + L-alanine. Catalyzes the removal of elemental sulfur from cysteine to produce alanine. It supplies the inorganic sulfur for iron-sulfur (Fe-S) clusters. Plays a role in both tRNA-processing and mitochondrial metabolism. Involved in the 2-thio-modification of both 5-carboxymethylaminomethyl-2-thiouridine in mitochondrial tRNAs and 5-methoxycarbonylmethyl-2-thiouridine (mcm5s2U) in cytoplasmic tRNAs. The protein is Cysteine desulfurase, mitochondrial of Candida maltosa (Yeast).